The chain runs to 257 residues: MVLIRVLANLLILQLSYAQKSSELVTGGHPCNINEHPFLVLVYHDGYQCGGTLINEEWVLTAAHCDGKKMKLQFGLHSKNEPNKDKQTRVPKEKFFCLSSKNFIKWGKDIMLIRLNRPVNNSTHIAPLSLPSSPPSQNTVCNIMGWGTISPTKEIYPDVPHCANINILDHAVCRAFYPGLLEKSKTLCAGILQGGKDICQGDSGGPLICNGQVQGIVSVGGNPCAEPRVPAIYTKVFDHLDWIKSIIAGNTAATCPL.

An N-terminal signal peptide occupies residues 1 to 18 (MVLIRVLANLLILQLSYA). A propeptide spanning residues 19 to 24 (QKSSEL) is cleaved from the precursor. In terms of domain architecture, Peptidase S1 spans 25–248 (VTGGHPCNIN…HLDWIKSIIA (224 aa)). Disulfide bonds link Cys31-Cys162, Cys49-Cys65, Cys97-Cys255, Cys141-Cys209, Cys173-Cys188, and Cys199-Cys224. Active-site charge relay system residues include His64 and Asp109. N-linked (GlcNAc...) asparagine glycans are attached at residues Asn120 and Asn121. Ser203 acts as the Charge relay system in catalysis.

The protein belongs to the peptidase S1 family. Snake venom subfamily. Monomer. As to expression, expressed by the venom gland.

It localises to the secreted. Functionally, snake venom serine protease that may act in the hemostasis system of the prey. The sequence is that of Snake venom serine protease KN11 from Trimeresurus stejnegeri (Chinese green tree viper).